A 96-amino-acid polypeptide reads, in one-letter code: Small ribosomal subunit protein bS18 (96 aa).

Over residues 1–22 the composition is skewed to basic and acidic residues; it reads MYKDIDSHQRDSRTDGHQDGFK. The interval 1–25 is disordered; sequence MYKDIDSHQRDSRTDGHQDGFKKNP.

This sequence belongs to the bacterial ribosomal protein bS18 family. As to quaternary structure, part of the 30S ribosomal subunit. Forms a tight heterodimer with protein bS6.

Its function is as follows. Binds as a heterodimer with protein bS6 to the central domain of the 16S rRNA, where it helps stabilize the platform of the 30S subunit. The sequence is that of Small ribosomal subunit protein bS18 from Borrelia duttonii (strain Ly).